We begin with the raw amino-acid sequence, 460 residues long: UDP-N-acetylmuramate--L-alanine ligase (460 aa).

119-125 (GSHGKTT) contributes to the ATP binding site.

This sequence belongs to the MurCDEF family.

It localises to the cytoplasm. The enzyme catalyses UDP-N-acetyl-alpha-D-muramate + L-alanine + ATP = UDP-N-acetyl-alpha-D-muramoyl-L-alanine + ADP + phosphate + H(+). The protein operates within cell wall biogenesis; peptidoglycan biosynthesis. Its function is as follows. Cell wall formation. The polypeptide is UDP-N-acetylmuramate--L-alanine ligase (Alkaliphilus metalliredigens (strain QYMF)).